Reading from the N-terminus, the 452-residue chain is NADH-quinone oxidoreductase subunit N 2 (452 aa).

A run of 14 helical transmembrane segments spans residues valine 6 to isoleucine 26, threonine 33 to glycine 53, threonine 70 to leucine 90, serine 97 to alanine 117, leucine 120 to phenylalanine 140, tyrosine 154 to alanine 174, isoleucine 194 to phenylalanine 214, phenylalanine 232 to isoleucine 252, isoleucine 258 to leucine 278, methionine 286 to glutamate 306, isoleucine 311 to isoleucine 331, phenylalanine 355 to valine 375, glycine 387 to leucine 407, and alanine 432 to phenylalanine 452.

It belongs to the complex I subunit 2 family. NDH-1 is composed of 14 different subunits. Subunits NuoA, H, J, K, L, M, N constitute the membrane sector of the complex.

The protein localises to the cell inner membrane. The catalysed reaction is a quinone + NADH + 5 H(+)(in) = a quinol + NAD(+) + 4 H(+)(out). In terms of biological role, NDH-1 shuttles electrons from NADH, via FMN and iron-sulfur (Fe-S) centers, to quinones in the respiratory chain. The immediate electron acceptor for the enzyme in this species is believed to be ubiquinone. Couples the redox reaction to proton translocation (for every two electrons transferred, four hydrogen ions are translocated across the cytoplasmic membrane), and thus conserves the redox energy in a proton gradient. The polypeptide is NADH-quinone oxidoreductase subunit N 2 (Thermodesulfovibrio yellowstonii (strain ATCC 51303 / DSM 11347 / YP87)).